Here is a 414-residue protein sequence, read N- to C-terminus: tRNA N6-adenosine threonylcarbamoyltransferase, mitochondrial (414 aa).

The N-terminal 29 residues, 1–29 (MLILTKTAGVFFKPSKRKVYEFLRSFNFH), are a transit peptide targeting the mitochondrion. Residues Lys74 and Lys140 each carry the N6-acetyllysine modification. A divalent metal cation-binding residues include His147 and His151. Substrate-binding positions include 169 to 173 (LISGG) and Asp202. Residue Lys203 is modified to N6-acetyllysine. Residues Gly222 and Glu226 each coordinate substrate. 3 positions are modified to N6-acetyllysine: Lys230, Lys240, and Lys299. Residues 329–330 (SN) and Thr357 contribute to the substrate site. Residue Asp358 participates in a divalent metal cation binding.

It belongs to the KAE1 / TsaD family. As to quaternary structure, monomer. The cofactor is a divalent metal cation. As to expression, widely expressed, with maximum expression in pituitary gland, prostate, rectum and uterus.

The protein localises to the mitochondrion. It catalyses the reaction L-threonylcarbamoyladenylate + adenosine(37) in tRNA = N(6)-L-threonylcarbamoyladenosine(37) in tRNA + AMP + H(+). Functionally, required for the formation of a threonylcarbamoyl group on adenosine at position 37 (t(6)A37) in mitochondrial tRNAs that read codons beginning with adenine. Probably involved in the transfer of the threonylcarbamoyl moiety of threonylcarbamoyl-AMP (TC-AMP) to the N6 group of A37. Involved in mitochondrial genome maintenance. This Homo sapiens (Human) protein is tRNA N6-adenosine threonylcarbamoyltransferase, mitochondrial.